A 323-amino-acid polypeptide reads, in one-letter code: Ubiquinone biosynthesis protein COQ4, mitochondrial (323 aa).

Zn(2+) contacts are provided by histidine 209, aspartate 210, histidine 213, and glutamate 225.

The protein belongs to the COQ4 family. As to quaternary structure, component of a multi-subunit COQ enzyme complex, composed of at least COQ3, COQ4, COQ5, COQ6, COQ7 and COQ9. It depends on Zn(2+) as a cofactor.

The protein localises to the mitochondrion inner membrane. It carries out the reaction a 4-hydroxy-3-methoxy-5-(all-trans-polyprenyl)benzoate + H(+) = a 2-methoxy-6-(all-trans-polyprenyl)phenol + CO2. Its pathway is cofactor biosynthesis; ubiquinone biosynthesis. Its function is as follows. Lyase that catalyzes the C1-decarboxylation of 4-hydroxy-3-methoxy-5-(all-trans-polyprenyl)benzoic acid into 2-methoxy-6-(all-trans-polyprenyl)phenol during ubiquinone biosynthesis. This chain is Ubiquinone biosynthesis protein COQ4, mitochondrial, found in Debaryomyces hansenii (strain ATCC 36239 / CBS 767 / BCRC 21394 / JCM 1990 / NBRC 0083 / IGC 2968) (Yeast).